A 911-amino-acid polypeptide reads, in one-letter code: Protein translocase subunit SecA (911 aa).

ATP-binding positions include glutamine 87, glycine 105–threonine 109, and aspartate 512. The interval alanine 861 to serine 880 is disordered. The Zn(2+) site is built by cysteine 895, cysteine 897, cysteine 906, and histidine 907.

Belongs to the SecA family. In terms of assembly, monomer and homodimer. Part of the essential Sec protein translocation apparatus which comprises SecA, SecYEG and auxiliary proteins SecDF-YajC and YidC. It depends on Zn(2+) as a cofactor.

The protein localises to the cell inner membrane. Its subcellular location is the cytoplasm. It carries out the reaction ATP + H2O + cellular proteinSide 1 = ADP + phosphate + cellular proteinSide 2.. In terms of biological role, part of the Sec protein translocase complex. Interacts with the SecYEG preprotein conducting channel. Has a central role in coupling the hydrolysis of ATP to the transfer of proteins into and across the cell membrane, serving both as a receptor for the preprotein-SecB complex and as an ATP-driven molecular motor driving the stepwise translocation of polypeptide chains across the membrane. In Pseudomonas putida (strain ATCC 47054 / DSM 6125 / CFBP 8728 / NCIMB 11950 / KT2440), this protein is Protein translocase subunit SecA.